The sequence spans 151 residues: Aspartate carbamoyltransferase regulatory chain (151 aa).

Residues C108, C113, C138, and C141 each coordinate Zn(2+).

This sequence belongs to the PyrI family. As to quaternary structure, contains catalytic and regulatory chains. Zn(2+) serves as cofactor.

Involved in allosteric regulation of aspartate carbamoyltransferase. The polypeptide is Aspartate carbamoyltransferase regulatory chain (Pyrobaculum islandicum (strain DSM 4184 / JCM 9189 / GEO3)).